The primary structure comprises 105 residues: Nucleoid-associated protein Dred_0043 (105 aa).

Belongs to the YbaB/EbfC family. In terms of assembly, homodimer.

The protein resides in the cytoplasm. Its subcellular location is the nucleoid. In terms of biological role, binds to DNA and alters its conformation. May be involved in regulation of gene expression, nucleoid organization and DNA protection. The polypeptide is Nucleoid-associated protein Dred_0043 (Desulforamulus reducens (strain ATCC BAA-1160 / DSM 100696 / MI-1) (Desulfotomaculum reducens)).